A 165-amino-acid chain; its full sequence is MKTSRLPIAIQQAVMRRLWEKLAQANLKLGRNYPEPKLSYTQRGTSAGTAWLESYEIRLNPVLLLENSEAFIEEVVPHELAHLLVWKHFGRVAPHGKEWKWMMESVLGVPARRTHQFELQSVRRNTFPYRCKCQEHQLTVRRHNRVVRGEAVYRCVHCGEQLTAK.

Positions 22-163 (LAQANLKLGR…RCVHCGEQLT (142 aa)) constitute a SprT-like domain. Residue His78 participates in Zn(2+) binding. Glu79 is a catalytic residue. Zn(2+) is bound at residue His82.

Belongs to the SprT family. Zn(2+) serves as cofactor.

Its subcellular location is the cytoplasm. In Escherichia fergusonii (strain ATCC 35469 / DSM 13698 / CCUG 18766 / IAM 14443 / JCM 21226 / LMG 7866 / NBRC 102419 / NCTC 12128 / CDC 0568-73), this protein is Protein SprT.